A 466-amino-acid chain; its full sequence is 3-isopropylmalate dehydratase large subunit (466 aa).

Positions 346, 406, and 409 each coordinate [4Fe-4S] cluster.

Belongs to the aconitase/IPM isomerase family. LeuC type 1 subfamily. In terms of assembly, heterodimer of LeuC and LeuD. It depends on [4Fe-4S] cluster as a cofactor.

It catalyses the reaction (2R,3S)-3-isopropylmalate = (2S)-2-isopropylmalate. It functions in the pathway amino-acid biosynthesis; L-leucine biosynthesis; L-leucine from 3-methyl-2-oxobutanoate: step 2/4. Functionally, catalyzes the isomerization between 2-isopropylmalate and 3-isopropylmalate, via the formation of 2-isopropylmaleate. This Alteromonas mediterranea (strain DSM 17117 / CIP 110805 / LMG 28347 / Deep ecotype) protein is 3-isopropylmalate dehydratase large subunit.